The primary structure comprises 113 residues: Outer membrane protein assembly factor BamE (113 aa).

The first 19 residues, Met-1–Gly-19, serve as a signal peptide directing secretion. A lipid anchor (N-palmitoyl cysteine) is attached at Cys-20. A lipid anchor (S-diacylglycerol cysteine) is attached at Cys-20.

It belongs to the BamE family. Part of the Bam complex, which is composed of the outer membrane protein BamA, and four lipoproteins BamB, BamC, BamD and BamE.

The protein localises to the cell outer membrane. Its function is as follows. Part of the outer membrane protein assembly complex, which is involved in assembly and insertion of beta-barrel proteins into the outer membrane. The sequence is that of Outer membrane protein assembly factor BamE from Escherichia coli O6:H1 (strain CFT073 / ATCC 700928 / UPEC).